The primary structure comprises 525 residues: GMP synthase [glutamine-hydrolyzing] (525 aa).

The 199-residue stretch at 8 to 206 (PLLILDFGSQ…VVDICKASTD (199 aa)) folds into the Glutamine amidotransferase type-1 domain. Cysteine 85 (nucleophile) is an active-site residue. Residues histidine 180 and glutamate 182 contribute to the active site. The region spanning 207 to 400 (WTPEHIIDEA…LGLPHDMVYR (194 aa)) is the GMPS ATP-PPase domain. ATP is bound at residue 234–240 (SGGVDSS).

As to quaternary structure, homodimer.

The enzyme catalyses XMP + L-glutamine + ATP + H2O = GMP + L-glutamate + AMP + diphosphate + 2 H(+). It participates in purine metabolism; GMP biosynthesis; GMP from XMP (L-Gln route): step 1/1. In terms of biological role, catalyzes the synthesis of GMP from XMP. The sequence is that of GMP synthase [glutamine-hydrolyzing] from Legionella pneumophila (strain Lens).